We begin with the raw amino-acid sequence, 348 residues long: AT-hook motif nuclear-localized protein 9 (348 aa).

The disordered stretch occupies residues 18-156 (HRGLSGSGPP…MASVGELMPS (139 aa)). The span at 31-46 (GSPQQQQGLRHLPNQN) shows a compositional bias: polar residues. The segment covering 47-60 (SPFGSGSTGFGSPS) has biased composition (low complexity). The Bipartite nuclear localization signal motif lies at 98 to 106 (KRKRGRPRK). The a.T hook 1 DNA-binding region spans 98–110 (KRKRGRPRKYGQD). Positions 112 to 131 (SVSLALSSSSVSTITPNNSN) are enriched in low complexity. A DNA-binding region (a.T hook 2) is located at residues 132-144 (KRGRGRPPGSGKK). In terms of domain architecture, PPC spans 157-299 (SSGMSFTPHV…EEEASEVVQE (143 aa)).

It localises to the nucleus. Its function is as follows. Transcription factor that specifically binds AT-rich DNA sequences related to the nuclear matrix attachment regions (MARs). This is AT-hook motif nuclear-localized protein 9 from Arabidopsis thaliana (Mouse-ear cress).